We begin with the raw amino-acid sequence, 608 residues long: Glutamine--fructose-6-phosphate aminotransferase [isomerizing] (608 aa).

The active-site Nucleophile; for GATase activity is cysteine 2. Residues cysteine 2–aspartate 217 enclose the Glutamine amidotransferase type-2 domain. 2 consecutive SIS domains span residues alanine 281 to threonine 422 and leucine 456 to proline 598. Lysine 603 (for Fru-6P isomerization activity) is an active-site residue.

As to quaternary structure, homodimer.

It localises to the cytoplasm. The catalysed reaction is D-fructose 6-phosphate + L-glutamine = D-glucosamine 6-phosphate + L-glutamate. Functionally, catalyzes the first step in hexosamine metabolism, converting fructose-6P into glucosamine-6P using glutamine as a nitrogen source. The sequence is that of Glutamine--fructose-6-phosphate aminotransferase [isomerizing] from Agrobacterium fabrum (strain C58 / ATCC 33970) (Agrobacterium tumefaciens (strain C58)).